A 343-amino-acid chain; its full sequence is Nicotianamine synthase 3 (343 aa).

It belongs to the nicotianamine synthase (NAS)-like family. In terms of tissue distribution, expressed in leaves.

The enzyme catalyses 3 S-adenosyl-L-methionine = nicotianamine + 3 S-methyl-5'-thioadenosine + 3 H(+). In terms of biological role, synthesizes nicotianamine, a polyamine that is the first intermediate in the synthesis of the phytosiderophores of the mugineic acid type found in gramineae which serve as a sensor for the physiological iron status within the plant, and/or might be involved in the transport of iron. The protein is Nicotianamine synthase 3 (NAS3) of Oryza sativa subsp. indica (Rice).